A 368-amino-acid chain; its full sequence is MSETAKKVIVGMSGGVDSSVSAWLLQQQGYQVEGLFMKNWEEDDGEEYCTAAADLADAQAVCDKLGIELHTVNFAAEYWDNVFELFLAEYKAGRTPNPDILCNKEIKFKAFLEFAAEDLGADYIATGHYVRRADVDGKSRLLRGLDSNKDQSYFLYTLSHEQIAKSLFPVGELEKPQVRKIAEDLGLVTAKKKDSTGICFIGERKFREFLGRYLPAQPGKIITVDGDEIGEHQGLMYHTLGQRKGLGIGGTKEGTEEPWYVVDKDVENNILIVAQGHEHPRLMSIGLIAQQLHWVDREPFTGTMRCTVKTRYRQTDIPCTVKALDDDRIEVIFDEPVAAVTPGQSAVFYNGEVCLGGGIIEQRLPLPV.

ATP contacts are provided by residues 11 to 18 (GMSGGVDS) and Met-37. The tract at residues 97–99 (NPD) is interaction with target base in tRNA. Cys-102 acts as the Nucleophile in catalysis. Residues Cys-102 and Cys-199 are joined by a disulfide bond. Position 127 (Gly-127) interacts with ATP. The interaction with tRNA stretch occupies residues 149 to 151 (KDQ). Catalysis depends on Cys-199, which acts as the Cysteine persulfide intermediate. Residues 311 to 312 (RY) form an interaction with tRNA region.

Belongs to the MnmA/TRMU family. In terms of assembly, interacts with TusE.

It localises to the cytoplasm. The enzyme catalyses S-sulfanyl-L-cysteinyl-[protein] + uridine(34) in tRNA + AH2 + ATP = 2-thiouridine(34) in tRNA + L-cysteinyl-[protein] + A + AMP + diphosphate + H(+). Its function is as follows. Catalyzes the 2-thiolation of uridine at the wobble position (U34) of tRNA(Lys), tRNA(Glu) and tRNA(Gln), leading to the formation of s(2)U34, the first step of tRNA-mnm(5)s(2)U34 synthesis. Sulfur is provided by IscS, via a sulfur-relay system. Binds ATP and its substrate tRNAs. The polypeptide is tRNA-specific 2-thiouridylase MnmA (Shigella dysenteriae serotype 1 (strain Sd197)).